A 1097-amino-acid polypeptide reads, in one-letter code: DNA-directed RNA polymerase subunit beta (1097 aa).

The interval 1073–1097 (DINPRRNTPSRPTYESLGTSEYEED) is disordered. Residues 1077–1091 (RRNTPSRPTYESLGT) are compositionally biased toward polar residues.

This sequence belongs to the RNA polymerase beta chain family. As to quaternary structure, in cyanobacteria the RNAP catalytic core is composed of 2 alpha, 1 beta, 1 beta', 1 gamma and 1 omega subunit. When a sigma factor is associated with the core the holoenzyme is formed, which can initiate transcription.

The catalysed reaction is RNA(n) + a ribonucleoside 5'-triphosphate = RNA(n+1) + diphosphate. Its function is as follows. DNA-dependent RNA polymerase catalyzes the transcription of DNA into RNA using the four ribonucleoside triphosphates as substrates. The chain is DNA-directed RNA polymerase subunit beta from Prochlorococcus marinus (strain MIT 9312).